The following is a 416-amino-acid chain: MLEQMGIAAKAASYKLALLSSGEKNRVLEKIADELEAQMESILSANVQDVEQARANGLSEAMLDRLTLTPARLKAIADDVRQVCNLADPVGQVIDGGLLDSGLRLERRRVPLGVVGVIYEARPNVTVDVASLCLKTGNAVILRGGKETHRTNSATVRVIQKALKACGLPEAAVQAIDNPDRSLVNEMLRMDKYIDMLIPRGGAGLHKLCREQSTIPVITGGIGVCHIFVDSSADIAPALKIIVNAKTQRPSTCNTVETLLVHQDIAERFLPALSKQMAESGVTLHGDETVMQVLHGPAKLVPLKPEELDNEFLSLDLNVVVVENMDGAITHIREHGTQHSDAILTCDMHNAARFVNEVDSAAVYVNASTRFTDGGQFGLGAEVAVSTQKLHARGPMGLEALTTYKWIGFGDGTIRA.

It belongs to the gamma-glutamyl phosphate reductase family.

The protein resides in the cytoplasm. It catalyses the reaction L-glutamate 5-semialdehyde + phosphate + NADP(+) = L-glutamyl 5-phosphate + NADPH + H(+). The protein operates within amino-acid biosynthesis; L-proline biosynthesis; L-glutamate 5-semialdehyde from L-glutamate: step 2/2. Catalyzes the NADPH-dependent reduction of L-glutamate 5-phosphate into L-glutamate 5-semialdehyde and phosphate. The product spontaneously undergoes cyclization to form 1-pyrroline-5-carboxylate. This is Gamma-glutamyl phosphate reductase from Salmonella newport (strain SL254).